A 440-amino-acid polypeptide reads, in one-letter code: D-serine dehydratase (440 aa).

The residue at position 116 (K116) is an N6-(pyridoxal phosphate)lysine.

The protein belongs to the serine/threonine dehydratase family. DsdA subfamily. Monomer. Pyridoxal 5'-phosphate serves as cofactor.

It catalyses the reaction D-serine = pyruvate + NH4(+). The protein is D-serine dehydratase of Salmonella paratyphi A (strain ATCC 9150 / SARB42).